A 172-amino-acid chain; its full sequence is Transcriptional repressor NrdR (172 aa).

The segment at 3–34 is a zinc-finger region; the sequence is CPFCRHPDSRVVDSRTTDDGTSIRRRRQCPDC. The region spanning 46–136 is the ATP-cone domain; that stretch reads LMVIKRSGVT…VYRAFDSLED (91 aa). A disordered region spans residues 152–172; the sequence is ERSGGGTCGTGTVPVPAGTAD. The segment covering 161–172 has biased composition (low complexity); that stretch reads TGTVPVPAGTAD.

The protein belongs to the NrdR family. Requires Zn(2+) as cofactor.

Functionally, negatively regulates transcription of bacterial ribonucleotide reductase nrd genes and operons by binding to NrdR-boxes. The chain is Transcriptional repressor NrdR from Streptomyces clavuligerus.